The following is a 31-amino-acid chain: Photosystem II reaction center protein T (31 aa).

N-formylmethionine is present on Met1. The chain crosses the membrane as a helical span at residues Ser3 to Phe23.

Belongs to the PsbT family. In terms of assembly, PSII is composed of 1 copy each of membrane proteins PsbA, PsbB, PsbC, PsbD, PsbE, PsbF, PsbH, PsbI, PsbJ, PsbK, PsbL, PsbM, PsbT, PsbX, PsbY, PsbZ, Psb30/Ycf12, peripheral proteins PsbO, CyanoQ (PsbQ), PsbU, PsbV and a large number of cofactors. It forms dimeric complexes.

Its subcellular location is the cellular thylakoid membrane. Found at the monomer-monomer interface of the photosystem II (PS II) dimer, plays a role in assembly and dimerization of PSII. PSII is a light-driven water plastoquinone oxidoreductase, using light energy to abstract electrons from H(2)O, generating a proton gradient subsequently used for ATP formation. The polypeptide is Photosystem II reaction center protein T (Synechocystis sp. (strain ATCC 27184 / PCC 6803 / Kazusa)).